The sequence spans 833 residues: Leucine--tRNA ligase (833 aa).

The 'HIGH' region signature appears at 41–52; the sequence is PYPSGAGLHVGH. Positions 610-614 match the 'KMSKS' region motif; sequence KMSKS. Position 613 (lysine 613) interacts with ATP.

Belongs to the class-I aminoacyl-tRNA synthetase family.

The protein resides in the cytoplasm. The catalysed reaction is tRNA(Leu) + L-leucine + ATP = L-leucyl-tRNA(Leu) + AMP + diphosphate. The chain is Leucine--tRNA ligase from Streptococcus suis (strain 98HAH33).